A 161-amino-acid chain; its full sequence is Nucleotide-binding protein Shewmr4_3156 (161 aa).

Belongs to the YajQ family.

Functionally, nucleotide-binding protein. This is Nucleotide-binding protein Shewmr4_3156 from Shewanella sp. (strain MR-4).